Reading from the N-terminus, the 804-residue chain is Leucine--tRNA ligase (804 aa).

The 'HIGH' region motif lies at 39–50 (PYPSGKGLHVGH). Residues 573 to 577 (KMSKS) carry the 'KMSKS' region motif. Lysine 576 contacts ATP.

It belongs to the class-I aminoacyl-tRNA synthetase family.

It is found in the cytoplasm. The enzyme catalyses tRNA(Leu) + L-leucine + ATP = L-leucyl-tRNA(Leu) + AMP + diphosphate. This Lactobacillus delbrueckii subsp. bulgaricus (strain ATCC 11842 / DSM 20081 / BCRC 10696 / JCM 1002 / NBRC 13953 / NCIMB 11778 / NCTC 12712 / WDCM 00102 / Lb 14) protein is Leucine--tRNA ligase.